Consider the following 310-residue polypeptide: Ribosome production factor 2 homolog (310 aa).

One can recognise a Brix domain in the interval 29–239 (KKTLILHGTK…VRRHRYPVES (211 aa)). The segment at 281–310 (LSNDVKGLKRERREAKKNKDHSKKQKINPE) is disordered. A compositionally biased stretch (basic residues) spans 295 to 310 (AKKNKDHSKKQKINPE).

This sequence belongs to the RPF2 family.

It localises to the nucleus. The protein resides in the nucleolus. In Oryza sativa subsp. japonica (Rice), this protein is Ribosome production factor 2 homolog.